The sequence spans 466 residues: Ribulose bisphosphate carboxylase large chain (466 aa).

N6,N6,N6-trimethyllysine is present on K5. Substrate is bound by residues N114 and T164. The active-site Proton acceptor is the K166. K168 provides a ligand contact to substrate. Residues K192, D194, and E195 each coordinate Mg(2+). K192 is subject to N6-carboxylysine. The active-site Proton acceptor is H285. R286, H318, and S370 together coordinate substrate.

Belongs to the RuBisCO large chain family. Type I subfamily. In terms of assembly, heterohexadecamer of 8 large chains and 8 small chains; disulfide-linked. The disulfide link is formed within the large subunit homodimers. It depends on Mg(2+) as a cofactor. Post-translationally, the disulfide bond which can form in the large chain dimeric partners within the hexadecamer appears to be associated with oxidative stress and protein turnover.

Its subcellular location is the plastid. It is found in the chloroplast. It carries out the reaction 2 (2R)-3-phosphoglycerate + 2 H(+) = D-ribulose 1,5-bisphosphate + CO2 + H2O. It catalyses the reaction D-ribulose 1,5-bisphosphate + O2 = 2-phosphoglycolate + (2R)-3-phosphoglycerate + 2 H(+). Functionally, ruBisCO catalyzes two reactions: the carboxylation of D-ribulose 1,5-bisphosphate, the primary event in carbon dioxide fixation, as well as the oxidative fragmentation of the pentose substrate in the photorespiration process. Both reactions occur simultaneously and in competition at the same active site. This is Ribulose bisphosphate carboxylase large chain from Poliothyrsis sinensis (Chinese pearlbloom tree).